Reading from the N-terminus, the 179-residue chain is Tetratricopeptide repeat protein 36 (179 aa).

TPR repeat units lie at residues 43 to 76 (SLQLEREGVALAEGVRLDEAIEKFTKALEVCPKN), 78 to 110 (SAYNNRAQAYRLQNKPEKALDDLNEALSLAGPK), and 115 to 148 (CQAYVQRASIYRLRGDDDKARTDFASAAELGSSF).

The protein belongs to the TTC36 family.

The protein is Tetratricopeptide repeat protein 36 of Caenorhabditis elegans.